A 131-amino-acid chain; its full sequence is ATP synthase epsilon chain (131 aa).

It belongs to the ATPase epsilon chain family. As to quaternary structure, F-type ATPases have 2 components, CF(1) - the catalytic core - and CF(0) - the membrane proton channel. CF(1) has five subunits: alpha(3), beta(3), gamma(1), delta(1), epsilon(1). CF(0) has three main subunits: a, b and c.

The protein resides in the cell membrane. Its function is as follows. Produces ATP from ADP in the presence of a proton gradient across the membrane. This Bacillus licheniformis (strain ATCC 14580 / DSM 13 / JCM 2505 / CCUG 7422 / NBRC 12200 / NCIMB 9375 / NCTC 10341 / NRRL NRS-1264 / Gibson 46) protein is ATP synthase epsilon chain.